The following is a 438-amino-acid chain: GTPase Der (438 aa).

2 consecutive EngA-type G domains span residues 4 to 168 and 176 to 351; these read PIVA…PAVP and LKVA…EAAN. Residues 10–17, 57–61, 120–123, 182–189, 229–233, and 294–297 contribute to the GTP site; these read GRPNVGKS, DTGGI, NKVE, DTAGM, and NKWD. The region spanning 352 to 436 is the KH-like domain; it reads RRVATGTLNA…PIRLIFRRGR (85 aa).

Belongs to the TRAFAC class TrmE-Era-EngA-EngB-Septin-like GTPase superfamily. EngA (Der) GTPase family. In terms of assembly, associates with the 50S ribosomal subunit.

Functionally, GTPase that plays an essential role in the late steps of ribosome biogenesis. The polypeptide is GTPase Der (Moorella thermoacetica (strain ATCC 39073 / JCM 9320)).